The sequence spans 547 residues: Chorismate synthase (547 aa).

Residues H17, H104, and D500 contribute to the active site.

The protein belongs to the chorismate synthase family.

It localises to the cytoplasm. The protein localises to the cytosol. It carries out the reaction 5-O-(1-carboxyvinyl)-3-phosphoshikimate = chorismate + phosphate. It catalyses the reaction FMNH2 + NADP(+) = FMN + NADPH + 2 H(+). It participates in metabolic intermediate biosynthesis; chorismate biosynthesis; chorismate from D-erythrose 4-phosphate and phosphoenolpyruvate: step 7/7. Functionally, bifunctional chorismate synthase and flavin reductase. Catalyzes the conversion of 5-enolpyruvylshikimate 3-phosphate (EPSP) to form chorismate. Acts also as a flavin reductase (FR) able to generate reduced flavin mononucleotide in the presence of NADPH. In Plasmodium vivax (strain Salvador I), this protein is Chorismate synthase.